Consider the following 321-residue polypeptide: Lipoyl synthase (321 aa).

[4Fe-4S] cluster is bound by residues Cys68, Cys73, Cys79, Cys94, Cys98, Cys101, and Ser308. A Radical SAM core domain is found at 80 to 297 (FNHGTATFMI…KELAESIGFT (218 aa)).

The protein belongs to the radical SAM superfamily. Lipoyl synthase family. [4Fe-4S] cluster serves as cofactor.

It is found in the cytoplasm. It carries out the reaction [[Fe-S] cluster scaffold protein carrying a second [4Fe-4S](2+) cluster] + N(6)-octanoyl-L-lysyl-[protein] + 2 oxidized [2Fe-2S]-[ferredoxin] + 2 S-adenosyl-L-methionine + 4 H(+) = [[Fe-S] cluster scaffold protein] + N(6)-[(R)-dihydrolipoyl]-L-lysyl-[protein] + 4 Fe(3+) + 2 hydrogen sulfide + 2 5'-deoxyadenosine + 2 L-methionine + 2 reduced [2Fe-2S]-[ferredoxin]. The protein operates within protein modification; protein lipoylation via endogenous pathway; protein N(6)-(lipoyl)lysine from octanoyl-[acyl-carrier-protein]: step 2/2. Functionally, catalyzes the radical-mediated insertion of two sulfur atoms into the C-6 and C-8 positions of the octanoyl moiety bound to the lipoyl domains of lipoate-dependent enzymes, thereby converting the octanoylated domains into lipoylated derivatives. The polypeptide is Lipoyl synthase (Shewanella halifaxensis (strain HAW-EB4)).